The following is an 883-amino-acid chain: Lysine-specific demethylase JMJ29 (883 aa).

2 disordered regions span residues 30–62 (KPFM…SAVK) and 161–204 (RTHS…SRKQ). Positions 34–43 (SKGSSPSSSS) are enriched in low complexity. Composition is skewed to polar residues over residues 161 to 172 (RTHSLSANSPEN) and 184 to 204 (SPAS…SRKQ). Zn(2+) contacts are provided by C209, C212, C223, C226, C232, C235, C252, C255, C338, C341, C363, and H381. The RING-type; degenerate zinc-finger motif lies at 209 to 256 (CHQCLKGERITLLICSECEKTMFCLQCIRKWYPNLSEDDVVEKCPLCR). Residues 333 to 392 (DERVYCDHCATSIVDLHRSCPKCSYELCLKCCQEIREGSLSERPEMKFHYVDRGHRYMHG) form a B box-type; atypical zinc finger. The JmjC domain occupies 632 to 863 (PRTGILNIAT…ECLRLTEEFR (232 aa)). The Fe cation site is built by H676 and D678. The tract at residues 713-743 (NKVDKQSTEDCNEKEEEEEEELNMPEISSNE) is disordered. Residues 722-735 (DCNEKEEEEEEELN) are compositionally biased toward acidic residues. The Nuclear localization signal signature appears at 755-762 (FRREDVPK). H831 contacts Fe cation.

Belongs to the JARID1 histone demethylase family. The cofactor is Fe(2+). Expressed in inflorescences, roots, siliques, leaves and stems.

The protein resides in the nucleus. May function as histone H3 lysine demethylase and be involved in regulation of gene expression. In Arabidopsis thaliana (Mouse-ear cress), this protein is Lysine-specific demethylase JMJ29.